The following is a 162-amino-acid chain: Protein-export protein SecB (162 aa).

This sequence belongs to the SecB family. Homotetramer, a dimer of dimers. One homotetramer interacts with 1 SecA dimer.

Its subcellular location is the cytoplasm. Its function is as follows. One of the proteins required for the normal export of preproteins out of the cell cytoplasm. It is a molecular chaperone that binds to a subset of precursor proteins, maintaining them in a translocation-competent state. It also specifically binds to its receptor SecA. In Hamiltonella defensa subsp. Acyrthosiphon pisum (strain 5AT), this protein is Protein-export protein SecB.